Consider the following 51-residue polypeptide: MLSAKGVSLGLGLGLGAWGPVLLGVVGVAGALALYGYYKNRNAEPAAAEAV.

Residues 1-8 (MLSAKGVS) lie on the Lumenal side of the membrane. The interval 9–16 (LGLGLGLG) is LG region. The helical transmembrane segment at 9–29 (LGLGLGLGAWGPVLLGVVGVA) threads the bilayer. The Cytoplasmic segment spans residues 30–51 (GALALYGYYKNRNAEPAAAEAV).

The protein belongs to the magnetosome MamD/Mms5 family. Post-translationally, may undergo N-terminal cleavage.

The protein localises to the magnetosome membrane. Functionally, might be involved in magnetite crystal growth. The polypeptide is Magnetosome protein Mms5 (Magnetospirillum gryphiswaldense (strain DSM 6361 / JCM 21280 / NBRC 15271 / MSR-1)).